The sequence spans 374 residues: UDP-N-acetylglucosamine--N-acetylmuramyl-(pentapeptide) pyrophosphoryl-undecaprenol N-acetylglucosamine transferase (374 aa).

Residues 13 to 15 (TGG), asparagine 124, arginine 165, serine 193, and glutamine 294 contribute to the UDP-N-acetyl-alpha-D-glucosamine site.

This sequence belongs to the glycosyltransferase 28 family. MurG subfamily.

It localises to the cell inner membrane. The enzyme catalyses di-trans,octa-cis-undecaprenyl diphospho-N-acetyl-alpha-D-muramoyl-L-alanyl-D-glutamyl-meso-2,6-diaminopimeloyl-D-alanyl-D-alanine + UDP-N-acetyl-alpha-D-glucosamine = di-trans,octa-cis-undecaprenyl diphospho-[N-acetyl-alpha-D-glucosaminyl-(1-&gt;4)]-N-acetyl-alpha-D-muramoyl-L-alanyl-D-glutamyl-meso-2,6-diaminopimeloyl-D-alanyl-D-alanine + UDP + H(+). It participates in cell wall biogenesis; peptidoglycan biosynthesis. Functionally, cell wall formation. Catalyzes the transfer of a GlcNAc subunit on undecaprenyl-pyrophosphoryl-MurNAc-pentapeptide (lipid intermediate I) to form undecaprenyl-pyrophosphoryl-MurNAc-(pentapeptide)GlcNAc (lipid intermediate II). In Rhizobium johnstonii (strain DSM 114642 / LMG 32736 / 3841) (Rhizobium leguminosarum bv. viciae), this protein is UDP-N-acetylglucosamine--N-acetylmuramyl-(pentapeptide) pyrophosphoryl-undecaprenol N-acetylglucosamine transferase.